Reading from the N-terminus, the 430-residue chain is Type 3 secretion system ATPase (430 aa).

162-167 (GCGKTF) contacts ATP.

Belongs to the ATPase alpha/beta chains family. T3SS ATPase subfamily. The core secretion machinery of the T3SS is composed of approximately 20 different proteins, including cytoplasmic components, a base, an export apparatus and a needle. This subunit is part of the cytosolic complex. Forms homohexamers. Interacts directly with MxiN/SctL (stator protein) and Spa13/SctO (stalk protein). Can form a soluble complex with Spa33/SctQ, MxiN/SctL and MxiK/SctK.

It is found in the cytoplasm. The enzyme catalyses ATP + H2O + cellular proteinSide 1 = ADP + phosphate + cellular proteinSide 2.. With respect to regulation, oligomerization increases ATPase activity. Monomeric forms exhibit low-level ATPase activity by forming short-lived oligomers with active site contributions from at least two protomers. In contrast, oligomers exhibit enhanced ATP hydrolysis rates that likely result from multiple preformed active sites within the oligomeric complex. Oligomerization is important for both enzyme activation and T3SS function. Activity is regulated by MxiN/SctL, which differentially regulates the activity of the monomer and the oligomer: it up-regulates the ATPase activity of the monomer, while it down-regulates the activity of the oligomer. ATPase component of the type III secretion system (T3SS), also called injectisome, which is used to inject bacterial effector proteins into eukaryotic host cells. Acts as a molecular motor to provide the energy that is required for the export of proteins. Required for type III secretion apparatus (T3SA) formation, proper protein secretion, host cell invasion and virulence. May play a critical role in T3SS substrate recognition, disassembly of the effector/chaperone complex and unfolding of the effector in an ATP-dependent manner prior to secretion. The sequence is that of Type 3 secretion system ATPase from Shigella flexneri.